The chain runs to 359 residues: Glycerol-3-phosphate dehydrogenase [NAD(P)+] (359 aa).

NADPH is bound by residues Thr11, Trp12, Arg32, and Lys107. Positions 107 and 138 each coordinate sn-glycerol 3-phosphate. Ala142 is an NADPH binding site. Sn-glycerol 3-phosphate-binding residues include Lys193, Asp246, Ser256, Arg257, and Asn258. The active-site Proton acceptor is Lys193. Arg257 is an NADPH binding site. NADPH-binding residues include Val281 and Glu283.

Belongs to the NAD-dependent glycerol-3-phosphate dehydrogenase family.

The protein localises to the cytoplasm. The enzyme catalyses sn-glycerol 3-phosphate + NAD(+) = dihydroxyacetone phosphate + NADH + H(+). It catalyses the reaction sn-glycerol 3-phosphate + NADP(+) = dihydroxyacetone phosphate + NADPH + H(+). Its pathway is membrane lipid metabolism; glycerophospholipid metabolism. Catalyzes the reduction of the glycolytic intermediate dihydroxyacetone phosphate (DHAP) to sn-glycerol 3-phosphate (G3P), the key precursor for phospholipid synthesis. This Dehalococcoides mccartyi (strain ATCC BAA-2266 / KCTC 15142 / 195) (Dehalococcoides ethenogenes (strain 195)) protein is Glycerol-3-phosphate dehydrogenase [NAD(P)+].